The primary structure comprises 122 residues: Large ribosomal subunit protein uL14c (122 aa).

Belongs to the universal ribosomal protein uL14 family. As to quaternary structure, part of the 50S ribosomal subunit.

Its subcellular location is the plastid. It localises to the chloroplast. Functionally, binds to 23S rRNA. The protein is Large ribosomal subunit protein uL14c of Huperzia lucidula (Shining clubmoss).